The sequence spans 362 residues: Alternative oxidase, mitochondrial (362 aa).

The transit peptide at 1 to 64 directs the protein to the mitochondrion; that stretch reads MNTPKVNILH…RNFSTTSVTR (64 aa). The chain crosses the membrane as a helical span at residues 156–176; that stretch reads LVRFIFLESIAGVPGMVAGML. Positions 163, 202, and 205 each coordinate Fe cation. A helical transmembrane segment spans residues 222 to 242; that stretch reads LILGAQGVFFNAMFLSYLISP. 3 residues coordinate Fe cation: E253, E310, and H313.

The protein belongs to the alternative oxidase family. Homodimer; disulfide-linked. Requires Fe cation as cofactor.

It localises to the mitochondrion inner membrane. In terms of biological role, catalyzes cyanide-resistant oxygen consumption. May increase respiration when the cytochrome respiratory pathway is restricted, or in response to low temperatures. In Neurospora crassa (strain ATCC 24698 / 74-OR23-1A / CBS 708.71 / DSM 1257 / FGSC 987), this protein is Alternative oxidase, mitochondrial (aod-1).